Here is a 166-residue protein sequence, read N- to C-terminus: Ureidoglycolate lyase (166 aa).

Belongs to the ureidoglycolate lyase family. In terms of assembly, homodimer. The cofactor is Ni(2+).

The enzyme catalyses (S)-ureidoglycolate = urea + glyoxylate. The protein operates within nitrogen metabolism; (S)-allantoin degradation. Catalyzes the catabolism of the allantoin degradation intermediate (S)-ureidoglycolate, generating urea and glyoxylate. Involved in the utilization of allantoin as nitrogen source. The protein is Ureidoglycolate lyase of Agrobacterium fabrum (strain C58 / ATCC 33970) (Agrobacterium tumefaciens (strain C58)).